We begin with the raw amino-acid sequence, 313 residues long: Ribosomal protein L11 methyltransferase (313 aa).

S-adenosyl-L-methionine contacts are provided by T164, G185, D207, and N249.

The protein belongs to the methyltransferase superfamily. PrmA family.

It localises to the cytoplasm. The enzyme catalyses L-lysyl-[protein] + 3 S-adenosyl-L-methionine = N(6),N(6),N(6)-trimethyl-L-lysyl-[protein] + 3 S-adenosyl-L-homocysteine + 3 H(+). Its function is as follows. Methylates ribosomal protein L11. The polypeptide is Ribosomal protein L11 methyltransferase (Clostridium botulinum (strain Eklund 17B / Type B)).